Consider the following 457-residue polypeptide: Ribosomal RNA-processing protein 8 (457 aa).

2 disordered regions span residues 52–114 (LSQQ…EVER) and 148–235 (SLNS…QETR). Phosphoserine is present on residues Ser-62, Ser-64, and Ser-105. The span at 148 to 165 (SLNSVDQTVHNSRTSTAT) shows a compositional bias: polar residues. Phosphoserine is present on residues Ser-172 and Ser-177. A compositionally biased stretch (polar residues) spans 174–183 (ESASPNSSHT). Basic residues predominate over residues 184–203 (LSRKQWRNRQKNKRRHKNKF). 6 residues coordinate S-adenosyl-L-methionine: His-282, Gly-317, Asp-335, Asp-347, Met-348, and Cys-364.

The protein belongs to the methyltransferase superfamily. RRP8 family. In terms of assembly, component of the eNoSC complex, composed of SIRT1, SUV39H1 and RRP8.

Its subcellular location is the nucleus. The protein localises to the nucleolus. Its function is as follows. Essential component of the eNoSC (energy-dependent nucleolar silencing) complex, a complex that mediates silencing of rDNA in response to intracellular energy status and acts by recruiting histone-modifying enzymes. The eNoSC complex is able to sense the energy status of cell: upon glucose starvation, elevation of NAD(+)/NADP(+) ratio activates SIRT1, leading to histone H3 deacetylation followed by dimethylation of H3 at 'Lys-9' (H3K9me2) by SUV39H1 and the formation of silent chromatin in the rDNA locus. In the complex, RRP8 binds to H3K9me2 and probably acts as a methyltransferase. Its substrates are however unknown. In Rattus norvegicus (Rat), this protein is Ribosomal RNA-processing protein 8 (Rrp8).